We begin with the raw amino-acid sequence, 274 residues long: 2,3,4,5-tetrahydropyridine-2,6-dicarboxylate N-succinyltransferase (274 aa).

2 residues coordinate substrate: Arg-104 and Asp-141.

This sequence belongs to the transferase hexapeptide repeat family. Homotrimer.

Its subcellular location is the cytoplasm. It catalyses the reaction (S)-2,3,4,5-tetrahydrodipicolinate + succinyl-CoA + H2O = (S)-2-succinylamino-6-oxoheptanedioate + CoA. It participates in amino-acid biosynthesis; L-lysine biosynthesis via DAP pathway; LL-2,6-diaminopimelate from (S)-tetrahydrodipicolinate (succinylase route): step 1/3. This Escherichia coli O6:H1 (strain CFT073 / ATCC 700928 / UPEC) protein is 2,3,4,5-tetrahydropyridine-2,6-dicarboxylate N-succinyltransferase.